The primary structure comprises 356 residues: Trifolitoxin operon protein TfxC (356 aa).

This Rhizobium leguminosarum bv. trifolii protein is Trifolitoxin operon protein TfxC (tfxC).